The sequence spans 247 residues: uncharacterized protein (247 aa).

NAD(+) contacts are provided by leucine 19, aspartate 38, aspartate 63, and valine 64. Serine 142 contributes to the substrate binding site. 3 residues coordinate NAD(+): tyrosine 155, lysine 159, and serine 190. Tyrosine 155 functions as the Proton acceptor in the catalytic mechanism.

The protein belongs to the short-chain dehydrogenases/reductases (SDR) family.

This is an uncharacterized protein from Mycobacterium bovis (strain ATCC BAA-935 / AF2122/97).